The sequence spans 685 residues: Acetate--CoA ligase [ADP-forming] I (685 aa).

The region spanning 477–513 (LPVLEAYGIEVAPYGIARNVDEARDIAESIGYPVVLK) is the ATP-grasp domain. Residue 503–514 (AESIGYPVVLKV) coordinates ATP.

The protein in the N-terminal section; belongs to the acetate CoA ligase alpha subunit family. In the C-terminal section; belongs to the acetate CoA ligase beta subunit family. Homodimer.

It carries out the reaction acetate + ATP + CoA = acetyl-CoA + ADP + phosphate. With respect to regulation, activity requires divalent metal cations. Functionally, catalyzes the reversible formation of acetate and ATP from acetyl-CoA by using ADP and phosphate. Can use other substrates such as propionyl-CoA and butyryl-CoA, but not phenylacetyl-CoA. Seems to be involved primarily in the conversion of acetyl-CoA to acetate. Participates in the degradation of branched-chain amino acids via branched-chain-acyl-CoA esters. This Archaeoglobus fulgidus (strain ATCC 49558 / DSM 4304 / JCM 9628 / NBRC 100126 / VC-16) protein is Acetate--CoA ligase [ADP-forming] I.